We begin with the raw amino-acid sequence, 475 residues long: Ribulose bisphosphate carboxylase large chain (475 aa).

Residues 1–2 (MS) constitute a propeptide that is removed on maturation. Pro3 carries the post-translational modification N-acetylproline. An N6,N6,N6-trimethyllysine modification is found at Lys14. Substrate-binding residues include Asn123 and Thr173. The active-site Proton acceptor is Lys175. Lys177 is a binding site for substrate. 3 residues coordinate Mg(2+): Lys201, Asp203, and Glu204. Lys201 is subject to N6-carboxylysine. His294 serves as the catalytic Proton acceptor. Positions 295, 327, and 379 each coordinate substrate.

The protein belongs to the RuBisCO large chain family. Type I subfamily. Heterohexadecamer of 8 large chains and 8 small chains; disulfide-linked. The disulfide link is formed within the large subunit homodimers. Mg(2+) serves as cofactor. In terms of processing, the disulfide bond which can form in the large chain dimeric partners within the hexadecamer appears to be associated with oxidative stress and protein turnover.

The protein resides in the plastid. The protein localises to the chloroplast. It carries out the reaction 2 (2R)-3-phosphoglycerate + 2 H(+) = D-ribulose 1,5-bisphosphate + CO2 + H2O. The enzyme catalyses D-ribulose 1,5-bisphosphate + O2 = 2-phosphoglycolate + (2R)-3-phosphoglycerate + 2 H(+). RuBisCO catalyzes two reactions: the carboxylation of D-ribulose 1,5-bisphosphate, the primary event in carbon dioxide fixation, as well as the oxidative fragmentation of the pentose substrate in the photorespiration process. Both reactions occur simultaneously and in competition at the same active site. This Carpinus caroliniana (American hornbeam) protein is Ribulose bisphosphate carboxylase large chain.